The following is a 231-amino-acid chain: 7-cyano-7-deazaguanine synthase (231 aa).

8-18 lines the ATP pocket; that stretch reads FSGGQDSTTCL. Residues C188, C197, C200, and C203 each contribute to the Zn(2+) site.

The protein belongs to the QueC family. Zn(2+) is required as a cofactor.

It carries out the reaction 7-carboxy-7-deazaguanine + NH4(+) + ATP = 7-cyano-7-deazaguanine + ADP + phosphate + H2O + H(+). It functions in the pathway purine metabolism; 7-cyano-7-deazaguanine biosynthesis. Functionally, catalyzes the ATP-dependent conversion of 7-carboxy-7-deazaguanine (CDG) to 7-cyano-7-deazaguanine (preQ(0)). This is 7-cyano-7-deazaguanine synthase from Escherichia coli O157:H7.